The chain runs to 295 residues: Phosphoribosylaminoimidazole-succinocarboxamide synthase (295 aa).

It belongs to the SAICAR synthetase family.

It carries out the reaction 5-amino-1-(5-phospho-D-ribosyl)imidazole-4-carboxylate + L-aspartate + ATP = (2S)-2-[5-amino-1-(5-phospho-beta-D-ribosyl)imidazole-4-carboxamido]succinate + ADP + phosphate + 2 H(+). It functions in the pathway purine metabolism; IMP biosynthesis via de novo pathway; 5-amino-1-(5-phospho-D-ribosyl)imidazole-4-carboxamide from 5-amino-1-(5-phospho-D-ribosyl)imidazole-4-carboxylate: step 1/2. The polypeptide is Phosphoribosylaminoimidazole-succinocarboxamide synthase (Halorhodospira halophila (strain DSM 244 / SL1) (Ectothiorhodospira halophila (strain DSM 244 / SL1))).